The sequence spans 500 residues: Intracellular exo-alpha-(1-&gt;5)-L-arabinofuranosidase (500 aa).

Alpha-L-arabinofuranose contacts are provided by Glu-28, Asn-73, and Asn-173. The active-site Proton donor/acceptor is the Glu-174. Residues Tyr-245, Glu-293, and Gln-350 each coordinate alpha-L-arabinofuranose. The active-site Nucleophile is the Glu-293.

Belongs to the glycosyl hydrolase 51 family. As to quaternary structure, homohexamer; trimer of dimers.

The protein localises to the cytoplasm. The catalysed reaction is Hydrolysis of terminal non-reducing alpha-L-arabinofuranoside residues in alpha-L-arabinosides.. The protein operates within glycan metabolism; L-arabinan degradation. Its function is as follows. Involved in the degradation of arabinan and is a key enzyme in the complete degradation of the plant cell wall. Catalyzes the cleavage of terminal alpha-(1-&gt;5)-arabinofuranosyl bonds in different hemicellulosic homopolysaccharides (branched and debranched arabinans). The protein is Intracellular exo-alpha-(1-&gt;5)-L-arabinofuranosidase (abfA) of Halalkalibacterium halodurans (strain ATCC BAA-125 / DSM 18197 / FERM 7344 / JCM 9153 / C-125) (Bacillus halodurans).